Reading from the N-terminus, the 101-residue chain is Apolipoprotein C-III (101 aa).

A signal peptide spans 1–20 (MQPRMLLIVALVALLASARA). Met-64 is subject to Methionine sulfoxide. Residues 69 to 101 (KSLKGYWSKFTDKFTGLWESGPEDQLTTPTLEP) form a lipid-binding region. Thr-96 carries an O-linked (GalNAc...) threonine glycan.

It belongs to the apolipoprotein C3 family. In terms of processing, the most abundant glycoforms are characterized by an O-linked disaccharide galactose linked to N-acetylgalactosamine (Gal-GalNAc), further modified with up to 3 sialic acid residues. Less abundant glycoforms are characterized by more complex and fucosylated glycan moieties. O-glycosylated on Thr-96 with a core 1 or possibly core 8 glycan. As to expression, synthesized predominantly in liver and to a lesser degree in intestine.

It is found in the secreted. Its function is as follows. Component of triglyceride-rich very low density lipoproteins (VLDL) and high density lipoproteins (HDL) in plasma. Plays a multifaceted role in triglyceride homeostasis. Intracellularly, promotes hepatic very low density lipoprotein 1 (VLDL1) assembly and secretion; extracellularly, attenuates hydrolysis and clearance of triglyceride-rich lipoproteins (TRLs). Impairs the lipolysis of TRLs by inhibiting lipoprotein lipase and the hepatic uptake of TRLs by remnant receptors. Formed of several curved helices connected via semiflexible hinges, so that it can wrap tightly around the curved micelle surface and easily adapt to the different diameters of its natural binding partners. The sequence is that of Apolipoprotein C-III (Apoc3) from Rattus norvegicus (Rat).